The following is a 170-amino-acid chain: NADH-quinone oxidoreductase subunit B (170 aa).

Residues Cys-42, Cys-43, Cys-107, and Cys-136 each contribute to the [4Fe-4S] cluster site.

This sequence belongs to the complex I 20 kDa subunit family. As to quaternary structure, NDH-1 is composed of 14 different subunits. Subunits NuoB, C, D, E, F, and G constitute the peripheral sector of the complex. It depends on [4Fe-4S] cluster as a cofactor.

It is found in the cell inner membrane. It carries out the reaction a quinone + NADH + 5 H(+)(in) = a quinol + NAD(+) + 4 H(+)(out). Functionally, NDH-1 shuttles electrons from NADH, via FMN and iron-sulfur (Fe-S) centers, to quinones in the respiratory chain. The immediate electron acceptor for the enzyme in this species is believed to be ubiquinone. Couples the redox reaction to proton translocation (for every two electrons transferred, four hydrogen ions are translocated across the cytoplasmic membrane), and thus conserves the redox energy in a proton gradient. This Campylobacter curvus (strain 525.92) protein is NADH-quinone oxidoreductase subunit B.